A 148-amino-acid polypeptide reads, in one-letter code: 1,4-dihydroxy-2-naphthoyl-CoA hydrolase (148 aa).

Residue D15 is part of the active site.

Belongs to the 4-hydroxybenzoyl-CoA thioesterase family. DHNA-CoA hydrolase subfamily.

It carries out the reaction 1,4-dihydroxy-2-naphthoyl-CoA + H2O = 1,4-dihydroxy-2-naphthoate + CoA + H(+). Its pathway is cofactor biosynthesis; phylloquinone biosynthesis. It participates in quinol/quinone metabolism; 1,4-dihydroxy-2-naphthoate biosynthesis; 1,4-dihydroxy-2-naphthoate from chorismate: step 7/7. In terms of biological role, catalyzes the hydrolysis of 1,4-dihydroxy-2-naphthoyl-CoA (DHNA-CoA) to 1,4-dihydroxy-2-naphthoate (DHNA), a reaction involved in phylloquinone (vitamin K1) biosynthesis. This is 1,4-dihydroxy-2-naphthoyl-CoA hydrolase from Nostoc sp. (strain PCC 7120 / SAG 25.82 / UTEX 2576).